The following is a 148-amino-acid chain: Urease accessory protein UreE (148 aa).

It belongs to the UreE family.

It is found in the cytoplasm. Functionally, involved in urease metallocenter assembly. Binds nickel. Probably functions as a nickel donor during metallocenter assembly. The protein is Urease accessory protein UreE of Lysinibacillus sphaericus (strain C3-41).